The sequence spans 1537 residues: Dual oxidase (1537 aa).

Residues 1-29 (MSVPSAPHQRAESKNRVPRPGQKNRKLPK) are disordered. Topologically, residues 1-626 (MSVPSAPHQR…EGYDYFSGSE (626 aa)) are extracellular. Positions 63–628 (MYSQTEKQRY…YDYFSGSELM (566 aa)) are peroxidase-like; mediates peroxidase activity. N-linked (GlcNAc...) asparagine glycans are attached at residues asparagine 133, asparagine 233, asparagine 577, and asparagine 606. The helical transmembrane segment at 627-647 (LMFIYVCVFLGFVPILCAGAG) threads the bilayer. At 648 to 1029 (YCVVKLQNSK…ITFLEENRQN (382 aa)) the chain is on the cytoplasmic side. Serine 826 is modified (phosphoserine). EF-hand domains are found at residues 855–890 (PNDM…FSRG), 891–926 (KTDD…LVEI), and 936–971 (QVTE…YKGD). Residues aspartate 868, aspartate 870, aspartate 872, arginine 874, glutamate 879, aspartate 904, aspartate 906, asparagine 908, and glutamate 915 each contribute to the Ca(2+) site. Residues 1030–1050 (IFYLFLFYVVTIVLFVERFIH) traverse the membrane as a helical segment. Residues 1051-1065 (YSFMAEHTDLRHIMG) lie on the Extracellular side of the membrane. A helical membrane pass occupies residues 1066 to 1086 (VGIAITRGSAASLSFCYSLLL). Positions 1078–1218 (LSFCYSLLLL…TLYIGLYLLS (141 aa)) constitute a Ferric oxidoreductase domain. At 1087–1116 (LTMSRNLITKLKEFPIQQYIPLDSHIQFHK) the chain is on the cytoplasmic side. A Phosphotyrosine modification is found at tyrosine 1105. A helical transmembrane segment spans residues 1117 to 1137 (IAACTALFFSVLHTVGHIVNF). The Extracellular segment spans residues 1138 to 1171 (YHVSTQSHENLRCLTREVHFASDYKPDITFWLFQ). Residues 1172–1192 (TVTGTTGVMLFIIMCIIFVFA) form a helical membrane-spanning segment. At 1193-1202 (HPTIRKKAYN) the chain is on the cytoplasmic side. The chain crosses the membrane as a helical span at residues 1203–1223 (FFWNMHTLYIGLYLLSLIHGL). At 1224-1230 (ARLTGPP) the chain is on the extracellular side. The helical transmembrane segment at 1231–1251 (RFWMFFLGPGIVYTLDKIVSL) threads the bilayer. The Cytoplasmic portion of the chain corresponds to 1252-1537 (RTKYMALDVI…YFIHHFENFG (286 aa)). The 106-residue stretch at 1253-1358 (TKYMALDVID…EGPFGGGNQD (106 aa)) folds into the FAD-binding FR-type domain.

This sequence in the N-terminal section; belongs to the peroxidase family.

The protein localises to the membrane. The enzyme catalyses NADH + O2 + H(+) = H2O2 + NAD(+). It catalyses the reaction NADPH + O2 + H(+) = H2O2 + NADP(+). Peroxidase activity is inhibited by aminotriazole and azide. Functionally, plays a role in innate immunity limiting microbial proliferation in the gut. Acts downstream of a hh-signaling pathway to induce the production of reactive oxygen species (ROS) in response to intestinal bacterial infection. May generate antimicrobial oxidative burst through its peroxidase-like domain. This chain is Dual oxidase (Duox), found in Drosophila melanogaster (Fruit fly).